The sequence spans 392 residues: Formate-dependent phosphoribosylglycinamide formyltransferase (392 aa).

N(1)-(5-phospho-beta-D-ribosyl)glycinamide-binding positions include 22-23 (EL) and Glu82. ATP-binding positions include Arg114, Lys155, 160-165 (SSGKGQ), 195-198 (EGVV), and Glu203. An ATP-grasp domain is found at 119–308 (RLAAEELQLP…EFALHVRAFL (190 aa)). Mg(2+) is bound by residues Glu267 and Glu279. N(1)-(5-phospho-beta-D-ribosyl)glycinamide is bound by residues Asp286, Lys355, and 362–363 (RR).

This sequence belongs to the PurK/PurT family. As to quaternary structure, homodimer.

It carries out the reaction N(1)-(5-phospho-beta-D-ribosyl)glycinamide + formate + ATP = N(2)-formyl-N(1)-(5-phospho-beta-D-ribosyl)glycinamide + ADP + phosphate + H(+). Its pathway is purine metabolism; IMP biosynthesis via de novo pathway; N(2)-formyl-N(1)-(5-phospho-D-ribosyl)glycinamide from N(1)-(5-phospho-D-ribosyl)glycinamide (formate route): step 1/1. Involved in the de novo purine biosynthesis. Catalyzes the transfer of formate to 5-phospho-ribosyl-glycinamide (GAR), producing 5-phospho-ribosyl-N-formylglycinamide (FGAR). Formate is provided by PurU via hydrolysis of 10-formyl-tetrahydrofolate. This is Formate-dependent phosphoribosylglycinamide formyltransferase from Klebsiella pneumoniae (strain 342).